We begin with the raw amino-acid sequence, 465 residues long: Methylenetetrahydrofolate--tRNA-(uracil-5-)-methyltransferase TrmFO (465 aa).

Residue 11 to 16 (GGGLAG) participates in FAD binding.

Belongs to the MnmG family. TrmFO subfamily. The cofactor is FAD.

It is found in the cytoplasm. The enzyme catalyses uridine(54) in tRNA + (6R)-5,10-methylene-5,6,7,8-tetrahydrofolate + NADH + H(+) = 5-methyluridine(54) in tRNA + (6S)-5,6,7,8-tetrahydrofolate + NAD(+). It catalyses the reaction uridine(54) in tRNA + (6R)-5,10-methylene-5,6,7,8-tetrahydrofolate + NADPH + H(+) = 5-methyluridine(54) in tRNA + (6S)-5,6,7,8-tetrahydrofolate + NADP(+). Its function is as follows. Catalyzes the folate-dependent formation of 5-methyl-uridine at position 54 (M-5-U54) in all tRNAs. In Acaryochloris marina (strain MBIC 11017), this protein is Methylenetetrahydrofolate--tRNA-(uracil-5-)-methyltransferase TrmFO.